A 390-amino-acid polypeptide reads, in one-letter code: MAMVTGGWGGPGGDTNGVDKAGGSYPRATEDDSASPPGATSDAEPGDEERPGLQVDCVVCGDKSSGKHYGVFTCEGCKSFFKRTIRRNLSYTCRSNRDCQIDQHHRNQCQYCRLKKCFRVGMRKEAVQPGPIPHALPGPAACSPPGAAGVEPFAGPPVSELIAQLLRAEPYPAAGRFGGGGAVLGIDNVCELAARLLFSTVEWARHAPFFPELPAADQVGLLRLSWSELFVLNAAQAPVPLHTAPLLAAAGLHAGPMAAERAVAFMDQVRAFQEQVDKLGRLQVDAAEYGCLKAIALFTPDACGLSDPAHVESLQEKAQVALTEYVRAQYPSQPQRFGRLLLRLPALRAVPASLISQLFFMRLVGKTPIETLIRDMLLSGSTFNWPYGSG.

The span at 1-15 (MAMVTGGWGGPGGDT) shows a compositional bias: gly residues. Residues 1 to 50 (MAMVTGGWGGPGGDTNGVDKAGGSYPRATEDDSASPPGATSDAEPGDEER) form a disordered region. A phosphoserine mark is found at Ser35 and Ser41. The nuclear receptor DNA-binding region spans 54–129 (QVDCVVCGDK…VGMRKEAVQP (76 aa)). 2 NR C4-type zinc fingers span residues 57–77 (CVVC…CEGC) and 93–117 (CRSN…LKKC). Positions 157-380 (PVSELIAQLL…TLIRDMLLSG (224 aa)) constitute an NR LBD domain. The tract at residues 314-390 (LQEKAQVALT…STFNWPYGSG (77 aa)) is important for dimerization.

It belongs to the nuclear hormone receptor family. NR2 subfamily. Binds DNA as dimer; homodimer and heterodimer with NR2F2 and probably NR2F1. Interacts with THRB.

It localises to the nucleus. Its function is as follows. Transcription factor predominantly involved in transcriptional repression. Binds to promoter/enhancer response elements that contain the imperfect 5'-AGGTCA-3' direct or inverted repeats with various spacings which are also recognized by other nuclear hormone receptors. Involved in modulation of hormonal responses. Represses transcriptional activity of the lutropin-choriogonadotropic hormone receptor/LHCGR gene, the renin/REN gene and the oxytocin-neurophysin/OXT gene. Represses the triiodothyronine-dependent and -independent transcriptional activity of the thyroid hormone receptor gene in a cell type-specific manner. The corepressing function towards thyroid hormone receptor beta/THRB involves at least in part the inhibition of THRB binding to triiodothyronine response elements (TREs) by NR2F6. Inhibits NFATC transcription factor DNA binding and subsequently its transcriptional activity. Acts as transcriptional repressor of IL-17 expression in Th-17 differentiated CD4(+) T cells and may be involved in induction and/or maintenance of peripheral immunological tolerance and autoimmunity. Involved in development of forebrain circadian clock; is required early in the development of the locus coeruleus (LC). This is Nuclear receptor subfamily 2 group F member 6 (Nr2f6) from Rattus norvegicus (Rat).